The following is a 491-amino-acid chain: Protein DETOXIFICATION 56 (491 aa).

The next 12 membrane-spanning stretches (helical) occupy residues 39-59 (LPLV…SVFL), 72-92 (LGFS…SAAM), 111-131 (TLFM…FLWL), 154-174 (LLYL…KAYL), 181-201 (LPIM…NIVL), 212-232 (MAVW…VIVV), 261-281 (GPCC…VLLT), 291-311 (VSIL…MLSL), 336-356 (YTTL…MIAF), 379-399 (MLIM…GEIV), 409-429 (MYAN…TLAF), and 438-458 (FLIG…IFIA).

The protein belongs to the multi antimicrobial extrusion (MATE) (TC 2.A.66.1) family. As to quaternary structure, interacts with BCA4 and HT1. Preferentially expressed in guard cells.

It localises to the cell membrane. Its function is as follows. Could function as a HCO(3)(-) -sensing component in the CO(2) signaling pathway in guard cells. Acts as an upstream repressor of HT1. Plays a role in stomatal response to CO(2). This chain is Protein DETOXIFICATION 56, found in Arabidopsis thaliana (Mouse-ear cress).